A 638-amino-acid chain; its full sequence is Polypeptide N-acetylgalactosaminyltransferase 15 (638 aa).

Topologically, residues 1 to 12 (MLPRKRPRSGRS) are cytoplasmic. A helical; Signal-anchor for type II membrane protein membrane pass occupies residues 13–35 (RLQFLLLFLTLGCVLMMVILLHP). Topologically, residues 36 to 638 (PPPTLHQAVT…FDQIHPVDER (603 aa)) are lumenal. A disordered region spans residues 134 to 157 (KDWRTEEDGEESEEVLTPLGPDSD). 5 disulfides stabilise this stretch: C181/C411, C402/C481, C516/C535, C561/C574, and C602/C619. Positions 190 to 299 (LPTASVILCF…PGWLEPLLSR (110 aa)) are catalytic subdomain A. Substrate is bound by residues D231 and R260. Mn(2+) contacts are provided by D283, H285, and H416. Positions 357–419 (PVRSPVVPRE…PCSRVGHIYR (63 aa)) are catalytic subdomain B. Residue R419 coordinates substrate. The Ricin B-type lectin domain maps to 503–630 (RFSGKLHNTG…GKTSQLWRFD (128 aa)). N573 carries N-linked (GlcNAc...) asparagine glycosylation.

Belongs to the glycosyltransferase 2 family. GalNAc-T subfamily. It depends on Mn(2+) as a cofactor. In terms of tissue distribution, specifically expressed in testis.

It localises to the golgi apparatus membrane. It catalyses the reaction L-seryl-[protein] + UDP-N-acetyl-alpha-D-galactosamine = a 3-O-[N-acetyl-alpha-D-galactosaminyl]-L-seryl-[protein] + UDP + H(+). The enzyme catalyses L-threonyl-[protein] + UDP-N-acetyl-alpha-D-galactosamine = a 3-O-[N-acetyl-alpha-D-galactosaminyl]-L-threonyl-[protein] + UDP + H(+). It participates in protein modification; protein glycosylation. Catalyzes the initial reaction in O-linked oligosaccharide biosynthesis, the transfer of an N-acetyl-D-galactosamine residue to a serine or threonine residue on the protein receptor. Although it displays a much weaker activity toward all substrates tested compared to GALNT2, it is able to transfer up to seven GalNAc residues to the Muc5AC peptide, suggesting that it can fill vicinal Thr/Ser residues in cooperation with other GALNT proteins. Prefers Muc1a as substrate. The sequence is that of Polypeptide N-acetylgalactosaminyltransferase 15 (Galnt15) from Mus musculus (Mouse).